A 393-amino-acid polypeptide reads, in one-letter code: Ig gamma-1 chain C region, membrane-bound form (393 aa).

The segment at 1–97 is CH1; the sequence is AKTTPPSVYP…ASSTKVDKKI (97 aa). Residues cysteine 27 and cysteine 82 are joined by a disulfide bond. The interval 98 to 110 is hinge; sequence VPRDCGCKPCICT. The CH2 stretch occupies residues 111–217; it reads VPEVSSVFIF…PIEKTISKTK (107 aa). 2 disulfide bridges follow: cysteine 138–cysteine 198 and cysteine 244–cysteine 302. A glycan (N-linked (GlcNAc...) asparagine) is linked at asparagine 174. The tract at residues 218–324 is CH3; the sequence is GRPKAPQVYT…EKSLSHSPGL (107 aa). A helical membrane pass occupies residues 340–357; it reads GLWTTITIFISLFLLSVC. The Cytoplasmic portion of the chain corresponds to 358–393; the sequence is YSAAVTLFKVKWIFSSVVELKQTLVPEYKNMIGQAP.

Its subcellular location is the cell membrane. This chain is Ig gamma-1 chain C region, membrane-bound form (Ighg1), found in Mus musculus (Mouse).